We begin with the raw amino-acid sequence, 132 residues long: Chemokine-like protein TAFA-5 (132 aa).

The first 43 residues, 1–43 (MAPSPRTSSRQDATALPSMSSTFWAFMILASLLIAYCSQLAAG), serve as a signal peptide directing secretion. N-linked (GlcNAc...) asparagine glycosylation occurs at N113.

This sequence belongs to the TAFA family. In terms of tissue distribution, expressed in the subcutaneous, brown, epididymal and perirenal adipose tissue (at protein level).

The protein localises to the secreted. Acts as a chemokine-like protein by regulating cell proliferation and migration through activation of G protein-coupled receptors (GPCRs), such as S1PR2 and FPR2. Stimulates chemotactic migration of macrophages mediated by the MAPK3/ERK1 and AKT1 pathway. Blocks TNFSF11/RANKL-induced osteoclast formation from macrophages by inhibiting up-regulation of osteoclast fusogenic and differentiation genes. Stimulation of macrophage migration and inhibition of osteoclast formation is mediated through the GPCR FPR2. Acts as an adipokine by negatively regulating vascular smooth muscle cell (VSMC) proliferation and migration in response to platelet-derived growth factor stimulation via GPCR S1PR2 and G protein GNA12/GNA13-transmitted RHOA signaling. Inhibits injury-induced cell proliferation and neointima formation in the femoral arteries. This is Chemokine-like protein TAFA-5 (Tafa5) from Mus musculus (Mouse).